The primary structure comprises 453 residues: MRYLPLTDTDRSEMLSVVGASSIDDLFVDVPKEARLDGPIRDLPMHASEMAVEKHMRARAAKNLVAGDVPFFLGAGAYRHHVPASVDHIIQRGEFLTAYTPYQPEIAQGTLQMLFEFQTQVAKLYGCEVANASMYDGSTACWEAISMASRVTKRNRAVLSGALHPHYSEVAKTMAKYLGLEIADAQPAIQAAPDNAGLTSRIDENTSCVVVQYPDILGRIADLTEIAEAAHAKGALLIVVNTEPVALGAIKSPGEMGADIVVGEGQSLGVGLQFGGPYLGLFAVRDKKHVRQMPGRLCGETVDAEGKRGFVLTLSTREQHIRREKATSNICTNSGLCALAFSVHMTLLGEVGLRRLAAENHRLACLTADRLAKVPGVTVLNDTFFNEFTIQVGQDAREIVRTLADKGVLAGVSLGRLYPDVERLSDALIVATTETTSEDDIEALGSALEEVLA.

Belongs to the GcvP family. N-terminal subunit subfamily. As to quaternary structure, the glycine cleavage system is composed of four proteins: P, T, L and H. In this organism, the P 'protein' is a heterodimer of two subunits.

It catalyses the reaction N(6)-[(R)-lipoyl]-L-lysyl-[glycine-cleavage complex H protein] + glycine + H(+) = N(6)-[(R)-S(8)-aminomethyldihydrolipoyl]-L-lysyl-[glycine-cleavage complex H protein] + CO2. Functionally, the glycine cleavage system catalyzes the degradation of glycine. The P protein binds the alpha-amino group of glycine through its pyridoxal phosphate cofactor; CO(2) is released and the remaining methylamine moiety is then transferred to the lipoamide cofactor of the H protein. The polypeptide is Probable glycine dehydrogenase (decarboxylating) subunit 1 (Erythrobacter litoralis (strain HTCC2594)).